The sequence spans 119 residues: Ribosome-binding factor A (119 aa).

The protein belongs to the RbfA family. As to quaternary structure, monomer. Binds 30S ribosomal subunits, but not 50S ribosomal subunits or 70S ribosomes.

The protein localises to the cytoplasm. Functionally, one of several proteins that assist in the late maturation steps of the functional core of the 30S ribosomal subunit. Associates with free 30S ribosomal subunits (but not with 30S subunits that are part of 70S ribosomes or polysomes). Required for efficient processing of 16S rRNA. May interact with the 5'-terminal helix region of 16S rRNA. In Limosilactobacillus reuteri (strain DSM 20016) (Lactobacillus reuteri), this protein is Ribosome-binding factor A.